Reading from the N-terminus, the 493-residue chain is Guanosine-5'-triphosphate,3'-diphosphate pyrophosphatase (493 aa).

Belongs to the GppA/Ppx family. GppA subfamily.

It carries out the reaction guanosine 3'-diphosphate 5'-triphosphate + H2O = guanosine 3',5'-bis(diphosphate) + phosphate + H(+). It functions in the pathway purine metabolism; ppGpp biosynthesis; ppGpp from GTP: step 2/2. Catalyzes the conversion of pppGpp to ppGpp. Guanosine pentaphosphate (pppGpp) is a cytoplasmic signaling molecule which together with ppGpp controls the 'stringent response', an adaptive process that allows bacteria to respond to amino acid starvation, resulting in the coordinated regulation of numerous cellular activities. The chain is Guanosine-5'-triphosphate,3'-diphosphate pyrophosphatase from Salmonella choleraesuis (strain SC-B67).